The following is a 548-amino-acid chain: 2-succinyl-5-enolpyruvyl-6-hydroxy-3-cyclohexene-1-carboxylate synthase (548 aa).

It belongs to the TPP enzyme family. MenD subfamily. Homodimer. The cofactor is Mg(2+). Mn(2+) is required as a cofactor. Requires thiamine diphosphate as cofactor.

It carries out the reaction isochorismate + 2-oxoglutarate + H(+) = 5-enolpyruvoyl-6-hydroxy-2-succinyl-cyclohex-3-ene-1-carboxylate + CO2. It functions in the pathway quinol/quinone metabolism; 1,4-dihydroxy-2-naphthoate biosynthesis; 1,4-dihydroxy-2-naphthoate from chorismate: step 2/7. The protein operates within quinol/quinone metabolism; menaquinone biosynthesis. Its function is as follows. Catalyzes the thiamine diphosphate-dependent decarboxylation of 2-oxoglutarate and the subsequent addition of the resulting succinic semialdehyde-thiamine pyrophosphate anion to isochorismate to yield 2-succinyl-5-enolpyruvyl-6-hydroxy-3-cyclohexene-1-carboxylate (SEPHCHC). This chain is 2-succinyl-5-enolpyruvyl-6-hydroxy-3-cyclohexene-1-carboxylate synthase, found in Mycolicibacterium vanbaalenii (strain DSM 7251 / JCM 13017 / BCRC 16820 / KCTC 9966 / NRRL B-24157 / PYR-1) (Mycobacterium vanbaalenii).